The following is a 150-amino-acid chain: D-galactose-binding lectin (150 aa).

Residues His16 and Gly19 each contribute to the D-galactose site. The N-linked (GlcNAc...) asparagine glycan is linked to Asn26. Residues 35-37 (DIH), His64, and Gly67 contribute to the D-galactose site. A glycan (N-linked (GlcNAc...) asparagine) is linked at Asn74. D-galactose-binding positions include 83 to 85 (DRH), His108, and Gly111. Asn118 carries N-linked (GlcNAc...) asparagine glycosylation. 127 to 129 (DEH) contributes to the D-galactose binding site.

As to quaternary structure, oligomerizes in solution. In terms of processing, the N-terminus is blocked. In terms of tissue distribution, expressed in mantle. Expressed 51 and 1.6 fold in mantle and gonads, respectively, relative to that in hemocytes. Expressed at a much lower level in other tissues tested including gill, muscle and hepatopancreas.

Its activity is regulated as follows. Hemagglutinating activity does not require Ca(2+) ions. Hemagglutinating activity is inhibited by porcine stomach mucin (PSM), bovine submaxillary mucin (BSM) and fetuin. Agglutination of V.proteolyticus bacteria is inhibited by D-galactose, but not by D-glucose. Fungal binding is inhibited by D-galactose, but not by pathogen-associated molecular patterns (PAMPs) including lipopolysaccharide (LPS), peptidoglycan and beta-glucan. In terms of biological role, D-galactose-binding lectin. Binds both alpha and beta anomer of galactose (Gal). Binds strongly to branched beta-Gal-terminated glycans and weakly to unbranched glycans with alpha-Gal on the end of chains. Has strong affinity for both Gal and GalNAc. Binds glycoproteins containing mucin-type chains. Has hemagglutinating activity towards human group A erythrocytes. Has hemagglutinating activity towards rabbit erythrocytes. Agglutinates V.proteolyticus bacteria. Binds strongly to fungi including species from genera Aspergillus, Alternaria, Fusarium and Haematonectria, and to a lesser extent to fungi from genera Trichoderma. Decreases conidia germination and hyphal growth of fungi. At high concentration, stimulates secretion of cytokines TNF-alpha and IFN-gamma from human peripheral blood cells, and at low concentration reduces hyperexpression of cytokine IL-10 in these cells, indicative of immunomodulatory capability. However, has no effect on IL-4 production. Recognizes pathogen-associated molecular patterns (PAMPs) and binds to peptidoglycan from S.aureus, but has only little binding to beta-1,3-glucan from E.gracilis and lipopolysaccharide (LPS) from E.coli. May be involved in innate immunity acting as an antibacterial or antifungal agent recognizing carbohydrate ligands on the surface of pathogens. This Mytilus trossulus (Blue mussel) protein is D-galactose-binding lectin.